The sequence spans 238 residues: Ion-translocating oxidoreductase complex subunit E (238 aa).

Transmembrane regions (helical) follow at residues 24–44, 52–72, 84–104, 106–126, 141–161, and 195–215; these read ALWQ…TLAV, LGMG…ISSM, VMIG…NAWM, ELYK…AVLG, ILDG…IGGI, and GILL…LLAA.

Belongs to the NqrDE/RnfAE family. In terms of assembly, the complex is composed of six subunits: RnfA, RnfB, RnfC, RnfD, RnfE and RnfG.

The protein resides in the cell inner membrane. In terms of biological role, part of a membrane-bound complex that couples electron transfer with translocation of ions across the membrane. In Azotobacter vinelandii (strain DJ / ATCC BAA-1303), this protein is Ion-translocating oxidoreductase complex subunit E.